The primary structure comprises 84 residues: Small ribosomal subunit protein bS20 (84 aa).

This sequence belongs to the bacterial ribosomal protein bS20 family.

Binds directly to 16S ribosomal RNA. In Levilactobacillus brevis (strain ATCC 367 / BCRC 12310 / CIP 105137 / JCM 1170 / LMG 11437 / NCIMB 947 / NCTC 947) (Lactobacillus brevis), this protein is Small ribosomal subunit protein bS20.